The following is a 79-amino-acid chain: Aquaporin Z (79 aa).

2 helical membrane passes run 4 to 24 and 33 to 53; these read LFAE…SAVF and IGFA…AYAV. The NPA 1 signature appears at 62-64; it reads NPA.

It belongs to the MIP/aquaporin (TC 1.A.8) family. As to quaternary structure, homotetramer.

It localises to the cell membrane. It carries out the reaction H2O(in) = H2O(out). In terms of biological role, channel that permits osmotically driven movement of water in both directions. It is involved in the osmoregulation and in the maintenance of cell turgor during volume expansion in rapidly growing cells. It mediates rapid entry or exit of water in response to abrupt changes in osmolarity. This chain is Aquaporin Z, found in Flavobacterium johnsoniae (Cytophaga johnsonae).